A 431-amino-acid polypeptide reads, in one-letter code: UDP-N-acetylmuramate--L-alanine ligase (431 aa).

108 to 114 (GSHGKTS) is an ATP binding site.

Belongs to the MurCDEF family.

It is found in the cytoplasm. The enzyme catalyses UDP-N-acetyl-alpha-D-muramate + L-alanine + ATP = UDP-N-acetyl-alpha-D-muramoyl-L-alanine + ADP + phosphate + H(+). Its pathway is cell wall biogenesis; peptidoglycan biosynthesis. Functionally, cell wall formation. This chain is UDP-N-acetylmuramate--L-alanine ligase, found in Exiguobacterium sibiricum (strain DSM 17290 / CCUG 55495 / CIP 109462 / JCM 13490 / 255-15).